The following is a 260-amino-acid chain: Translation initiation factor 2 subunit alpha (260 aa).

The 72-residue stretch at 12-83 (GDLIVGTVHK…KKGHVDASLK (72 aa)) folds into the S1 motif domain.

Belongs to the eIF-2-alpha family. In terms of assembly, heterotrimer composed of an alpha, a beta and a gamma chain.

In terms of biological role, eIF-2 functions in the early steps of protein synthesis by forming a ternary complex with GTP and initiator tRNA. The sequence is that of Translation initiation factor 2 subunit alpha from Methanosphaera stadtmanae (strain ATCC 43021 / DSM 3091 / JCM 11832 / MCB-3).